The primary structure comprises 139 residues: Large ribosomal subunit protein uL16 (139 aa).

It belongs to the universal ribosomal protein uL16 family. Part of the 50S ribosomal subunit.

In terms of biological role, binds 23S rRNA and is also seen to make contacts with the A and possibly P site tRNAs. This is Large ribosomal subunit protein uL16 from Mycoplasma pneumoniae (strain ATCC 29342 / M129 / Subtype 1) (Mycoplasmoides pneumoniae).